A 268-amino-acid polypeptide reads, in one-letter code: Orotidine 5'-phosphate decarboxylase (268 aa).

Residues Asp-39, 61–63, 93–102, Tyr-219, and Arg-237 each bind substrate; these read KTH and DRKFADIGNT. The active-site Proton donor is the Lys-95.

This sequence belongs to the OMP decarboxylase family.

It carries out the reaction orotidine 5'-phosphate + H(+) = UMP + CO2. The protein operates within pyrimidine metabolism; UMP biosynthesis via de novo pathway; UMP from orotate: step 2/2. The sequence is that of Orotidine 5'-phosphate decarboxylase (URA3) from Pachysolen tannophilus (Yeast).